Consider the following 334-residue polypeptide: tRNA-cytidine(32) 2-sulfurtransferase (334 aa).

Positions 74–79 (SGGKDS) match the PP-loop motif motif. Cys-149, Cys-152, and Cys-240 together coordinate [4Fe-4S] cluster.

The protein belongs to the TtcA family. Homodimer. Mg(2+) serves as cofactor. The cofactor is [4Fe-4S] cluster.

It is found in the cytoplasm. The catalysed reaction is cytidine(32) in tRNA + S-sulfanyl-L-cysteinyl-[cysteine desulfurase] + AH2 + ATP = 2-thiocytidine(32) in tRNA + L-cysteinyl-[cysteine desulfurase] + A + AMP + diphosphate + H(+). The protein operates within tRNA modification. Its function is as follows. Catalyzes the ATP-dependent 2-thiolation of cytidine in position 32 of tRNA, to form 2-thiocytidine (s(2)C32). The sulfur atoms are provided by the cysteine/cysteine desulfurase (IscS) system. In Burkholderia ambifaria (strain ATCC BAA-244 / DSM 16087 / CCUG 44356 / LMG 19182 / AMMD) (Burkholderia cepacia (strain AMMD)), this protein is tRNA-cytidine(32) 2-sulfurtransferase.